The primary structure comprises 372 residues: NAD(P)H-quinone oxidoreductase subunit 1 (372 aa).

A run of 8 helical transmembrane segments spans residues 27–47 (AIWM…GVLV), 97–117 (WLFL…YLIV), 130–150 (VGIF…LMAG), 176–196 (LALS…IDIV), 204–224 (ILGW…IAAL), 254–274 (FALF…VFAV), 308–328 (SLGI…AILL), and 351–371 (VSLV…FAFG).

Belongs to the complex I subunit 1 family. As to quaternary structure, NDH-1 is composed of at least 11 different subunits.

The protein resides in the cellular thylakoid membrane. It carries out the reaction a plastoquinone + NADH + (n+1) H(+)(in) = a plastoquinol + NAD(+) + n H(+)(out). It catalyses the reaction a plastoquinone + NADPH + (n+1) H(+)(in) = a plastoquinol + NADP(+) + n H(+)(out). NDH-1 shuttles electrons from an unknown electron donor, via FMN and iron-sulfur (Fe-S) centers, to quinones in the respiratory and/or the photosynthetic chain. The immediate electron acceptor for the enzyme in this species is believed to be plastoquinone. Couples the redox reaction to proton translocation, and thus conserves the redox energy in a proton gradient. This Microcystis aeruginosa (strain NIES-843 / IAM M-2473) protein is NAD(P)H-quinone oxidoreductase subunit 1.